The primary structure comprises 381 residues: Alkanesulfonate monooxygenase (381 aa).

It belongs to the SsuD family. Homotetramer.

The enzyme catalyses an alkanesulfonate + FMNH2 + O2 = an aldehyde + FMN + sulfite + H2O + 2 H(+). Functionally, catalyzes the desulfonation of aliphatic sulfonates. The protein is Alkanesulfonate monooxygenase of Escherichia coli O7:K1 (strain IAI39 / ExPEC).